The chain runs to 275 residues: 3-methyl-2-oxobutanoate hydroxymethyltransferase (275 aa).

2 residues coordinate Mg(2+): D49 and D88. 3-methyl-2-oxobutanoate-binding positions include 49–50 (DS), D88, and K118. E120 contributes to the Mg(2+) binding site. The Proton acceptor role is filled by E187.

It belongs to the PanB family. As to quaternary structure, homodecamer; pentamer of dimers. Requires Mg(2+) as cofactor.

Its subcellular location is the cytoplasm. It catalyses the reaction 3-methyl-2-oxobutanoate + (6R)-5,10-methylene-5,6,7,8-tetrahydrofolate + H2O = 2-dehydropantoate + (6S)-5,6,7,8-tetrahydrofolate. It functions in the pathway cofactor biosynthesis; (R)-pantothenate biosynthesis; (R)-pantoate from 3-methyl-2-oxobutanoate: step 1/2. Its function is as follows. Catalyzes the reversible reaction in which hydroxymethyl group from 5,10-methylenetetrahydrofolate is transferred onto alpha-ketoisovalerate to form ketopantoate. This Nitrobacter hamburgensis (strain DSM 10229 / NCIMB 13809 / X14) protein is 3-methyl-2-oxobutanoate hydroxymethyltransferase.